The chain runs to 129 residues: Large ribosomal subunit protein bL19 (129 aa).

It belongs to the bacterial ribosomal protein bL19 family.

Functionally, this protein is located at the 30S-50S ribosomal subunit interface and may play a role in the structure and function of the aminoacyl-tRNA binding site. In Burkholderia mallei (strain NCTC 10247), this protein is Large ribosomal subunit protein bL19.